Consider the following 119-residue polypeptide: Large ribosomal subunit protein uL22c (119 aa).

It belongs to the universal ribosomal protein uL22 family. In terms of assembly, part of the 50S ribosomal subunit.

It localises to the plastid. The protein localises to the chloroplast. Its function is as follows. This protein binds specifically to 23S rRNA. In terms of biological role, the globular domain of the protein is located near the polypeptide exit tunnel on the outside of the subunit, while an extended beta-hairpin is found that lines the wall of the exit tunnel in the center of the 70S ribosome. This chain is Large ribosomal subunit protein uL22c (rpl22), found in Chlorokybus atmophyticus (Soil alga).